The following is a 275-amino-acid chain: MATYFVGDLQGCYDELQLLLERVDFNPTQDKLYLVGDLVARGDKSLECLCFVKSLGNAAQTVLGNHDLHLIATALDIKKVKPRDRVDAIFNAPDFDEQIHWLRHQPLLVHSEELNFLMSHAGISPDWDLKTAKSCAAEVEQILQHGDFHYLIENMYSEQPDRWSPDLQGLARHRYIINAFTRMRFCYLDHRFDFACKSPLKDAPAELTPWFNLDNPLYKQIPIVFGHWASLVDEPTPKGIYALDTGCVWNNRMTMLRWEDKQFFTQSAVKNYSDF.

The protein belongs to the Ap4A hydrolase family.

The catalysed reaction is P(1),P(4)-bis(5'-adenosyl) tetraphosphate + H2O = 2 ADP + 2 H(+). Its function is as follows. Hydrolyzes diadenosine 5',5'''-P1,P4-tetraphosphate to yield ADP. In Haemophilus influenzae (strain PittGG), this protein is Bis(5'-nucleosyl)-tetraphosphatase, symmetrical.